A 179-amino-acid chain; its full sequence is Large ribosomal subunit protein uL5 (179 aa).

The protein belongs to the universal ribosomal protein uL5 family. In terms of assembly, part of the 50S ribosomal subunit; part of the 5S rRNA/L5/L18/L25 subcomplex. Contacts the 5S rRNA and the P site tRNA. Forms a bridge to the 30S subunit in the 70S ribosome.

Its function is as follows. This is one of the proteins that bind and probably mediate the attachment of the 5S RNA into the large ribosomal subunit, where it forms part of the central protuberance. In the 70S ribosome it contacts protein S13 of the 30S subunit (bridge B1b), connecting the 2 subunits; this bridge is implicated in subunit movement. Contacts the P site tRNA; the 5S rRNA and some of its associated proteins might help stabilize positioning of ribosome-bound tRNAs. This is Large ribosomal subunit protein uL5 from Buchnera aphidicola subsp. Cinara cedri (strain Cc).